The following is a 275-amino-acid chain: Orotidine 5'-phosphate decarboxylase (275 aa).

K95 serves as the catalytic Proton donor.

The protein belongs to the OMP decarboxylase family. Type 2 subfamily.

The enzyme catalyses orotidine 5'-phosphate + H(+) = UMP + CO2. It participates in pyrimidine metabolism; UMP biosynthesis via de novo pathway; UMP from orotate: step 2/2. The chain is Orotidine 5'-phosphate decarboxylase from Delftia acidovorans (strain DSM 14801 / SPH-1).